The following is a 474-amino-acid chain: Glutathione synthetase (474 aa).

Residue Arg125 coordinates substrate. Glu144 lines the ATP pocket. Glu144 and Asn146 together coordinate Mg(2+). Substrate is bound by residues Ile148–Ser151, Gln214–Asn216, Gln220, and Arg267–Tyr270. Residues Lys305, Lys364–Asn373, Tyr375, Met398–Ile401, and Glu425 contribute to the ATP site. Glu368 lines the Mg(2+) pocket. Residue Arg450 participates in substrate binding. 2 residues coordinate ATP: Lys452 and Asp458. Val461–Ala462 contributes to the substrate binding site.

Belongs to the eukaryotic GSH synthase family. Homodimer. It depends on Mg(2+) as a cofactor. As to expression, expressed ubiquitously.

It carries out the reaction gamma-L-glutamyl-L-cysteine + glycine + ATP = glutathione + ADP + phosphate + H(+). It catalyses the reaction gamma-L-glutamyl-(2S)-2-aminobutanoate + glycine + ATP = ophthalmate + ADP + phosphate + H(+). Its pathway is sulfur metabolism; glutathione biosynthesis; glutathione from L-cysteine and L-glutamate: step 2/2. Functionally, catalyzes the production of glutathione from gamma-glutamylcysteine and glycine in an ATP-dependent manner. Glutathione (gamma-glutamylcysteinylglycine, GSH) is the most abundant intracellular thiol in living aerobic cells and is required for numerous processes including the protection of cells against oxidative damage, amino acid transport, the detoxification of foreign compounds, the maintenance of protein sulfhydryl groups in a reduced state and acts as a cofactor for a number of enzymes. Participates in ophthalmate biosynthesis in hepatocytes. This is Glutathione synthetase from Xenopus laevis (African clawed frog).